Here is a 239-residue protein sequence, read N- to C-terminus: MKSIPGDIPQYLLIKAQLQARIQSGALKSGDKLPSERELCAIFNTTRITIRESLAQLESSGLIWRADRRGWFVTPERLWLDPTQNTNFHKLCREQGREPKTALLSGVLTTVPVEVMEPLQLQPFDQIYLLTRLRYADGRAVCYCENHCLPARVPELLQYDLNGSLTEVYESHYNLVYTSMHLSFYPTAMPAQAAQALGVMEGRPALLLRRLNYDQHGRVLDLDIEYWRHDSLRIEVDTH.

The 69-residue stretch at 8-76 (IPQYLLIKAQ…DRRGWFVTPE (69 aa)) folds into the HTH gntR-type domain. The segment at residues 36-55 (ERELCAIFNTTRITIRESLA) is a DNA-binding region (H-T-H motif).

In Salmonella typhi, this protein is Putative transcriptional regulator of 2-aminoethylphosphonate degradation operons (phnR).